The following is a 246-amino-acid chain: Octanoyltransferase (246 aa).

The 189-residue stretch at 46-234 folds into the BPL/LPL catalytic domain; that stretch reads GTAGEMVWLV…AFEEVFGAAE (189 aa). Substrate contacts are provided by residues 85 to 92, 165 to 167, and 178 to 180; these read RGGEYTYH, AIG, and GIA. Residue Cys196 is the Acyl-thioester intermediate of the active site.

Belongs to the LipB family.

It localises to the cytoplasm. It carries out the reaction octanoyl-[ACP] + L-lysyl-[protein] = N(6)-octanoyl-L-lysyl-[protein] + holo-[ACP] + H(+). The protein operates within protein modification; protein lipoylation via endogenous pathway; protein N(6)-(lipoyl)lysine from octanoyl-[acyl-carrier-protein]: step 1/2. Catalyzes the transfer of endogenously produced octanoic acid from octanoyl-acyl-carrier-protein onto the lipoyl domains of lipoate-dependent enzymes. Lipoyl-ACP can also act as a substrate although octanoyl-ACP is likely to be the physiological substrate. The protein is Octanoyltransferase of Chelativorans sp. (strain BNC1).